The primary structure comprises 283 residues: 5'-nucleotidase SurE (283 aa).

Residues D14, D15, S47, and N105 each coordinate a divalent metal cation.

The protein belongs to the SurE nucleotidase family. It depends on a divalent metal cation as a cofactor.

It localises to the cytoplasm. The catalysed reaction is a ribonucleoside 5'-phosphate + H2O = a ribonucleoside + phosphate. In terms of biological role, nucleotidase that shows phosphatase activity on nucleoside 5'-monophosphates. In Chlamydia muridarum (strain MoPn / Nigg), this protein is 5'-nucleotidase SurE.